The following is a 172-amino-acid chain: Shikimate kinase (172 aa).

14 to 19 (GAGKST) is an ATP binding site. Residue S18 participates in Mg(2+) binding. Positions 36, 60, and 82 each coordinate substrate. Position 120 (R120) interacts with ATP. Position 139 (R139) interacts with substrate. An ATP-binding site is contributed by Q156.

Belongs to the shikimate kinase family. In terms of assembly, monomer. The cofactor is Mg(2+).

It localises to the cytoplasm. It carries out the reaction shikimate + ATP = 3-phosphoshikimate + ADP + H(+). It functions in the pathway metabolic intermediate biosynthesis; chorismate biosynthesis; chorismate from D-erythrose 4-phosphate and phosphoenolpyruvate: step 5/7. Functionally, catalyzes the specific phosphorylation of the 3-hydroxyl group of shikimic acid using ATP as a cosubstrate. The protein is Shikimate kinase of Aliivibrio salmonicida (strain LFI1238) (Vibrio salmonicida (strain LFI1238)).